The chain runs to 492 residues: Catalase isozyme 2 (492 aa).

Catalysis depends on residues His-65 and Asn-138. Tyr-348 provides a ligand contact to heme.

Belongs to the catalase family. In terms of assembly, homotetramer. It depends on heme as a cofactor.

It is found in the peroxisome. It catalyses the reaction 2 H2O2 = O2 + 2 H2O. Functionally, occurs in almost all aerobically respiring organisms and serves to protect cells from the toxic effects of hydrogen peroxide. In Gossypium hirsutum (Upland cotton), this protein is Catalase isozyme 2 (CAT2).